The chain runs to 186 residues: Large ribosomal subunit protein uL5m (186 aa).

Belongs to the universal ribosomal protein uL5 family.

Its subcellular location is the mitochondrion. This is Large ribosomal subunit protein uL5m (RPL5) from Solanum tuberosum (Potato).